The sequence spans 592 residues: Mitochondrial-type heat shock protein 70 (592 aa).

The protein belongs to the heat shock protein 70 family.

Its subcellular location is the nucleus. Its function is as follows. May act as a chaperone. The chain is Mitochondrial-type heat shock protein 70 (HSP70) from Encephalitozoon cuniculi (strain GB-M1) (Microsporidian parasite).